A 414-amino-acid polypeptide reads, in one-letter code: Histidine--tRNA ligase (414 aa).

The protein belongs to the class-II aminoacyl-tRNA synthetase family. Homodimer.

Its subcellular location is the cytoplasm. It carries out the reaction tRNA(His) + L-histidine + ATP = L-histidyl-tRNA(His) + AMP + diphosphate + H(+). The chain is Histidine--tRNA ligase from Ehrlichia ruminantium (strain Gardel).